The sequence spans 375 residues: Probable RNA 3'-terminal phosphate cyclase-like protein (375 aa).

This sequence belongs to the RNA 3'-terminal cyclase family. Type 2 subfamily.

Its subcellular location is the nucleus. The protein resides in the nucleolus. Does not have cyclase activity. Plays a role in 40S-ribosomal-subunit biogenesis in the early pre-rRNA processing steps at sites A0, A1 and A2 that are required for proper maturation of the 18S RNA. This Arabidopsis thaliana (Mouse-ear cress) protein is Probable RNA 3'-terminal phosphate cyclase-like protein.